Reading from the N-terminus, the 186-residue chain is ATP synthase subunit delta (186 aa).

This sequence belongs to the ATPase delta chain family. In terms of assembly, F-type ATPases have 2 components, F(1) - the catalytic core - and F(0) - the membrane proton channel. F(1) has five subunits: alpha(3), beta(3), gamma(1), delta(1), epsilon(1). CF(0) has four main subunits: a(1), b(1), b'(1) and c(10-14). The alpha and beta chains form an alternating ring which encloses part of the gamma chain. F(1) is attached to F(0) by a central stalk formed by the gamma and epsilon chains, while a peripheral stalk is formed by the delta, b and b' chains.

The protein resides in the cell inner membrane. F(1)F(0) ATP synthase produces ATP from ADP in the presence of a proton or sodium gradient. F-type ATPases consist of two structural domains, F(1) containing the extramembraneous catalytic core and F(0) containing the membrane proton channel, linked together by a central stalk and a peripheral stalk. During catalysis, ATP synthesis in the catalytic domain of F(1) is coupled via a rotary mechanism of the central stalk subunits to proton translocation. Functionally, this protein is part of the stalk that links CF(0) to CF(1). It either transmits conformational changes from CF(0) to CF(1) or is implicated in proton conduction. This is ATP synthase subunit delta from Bradyrhizobium sp. (strain ORS 278).